We begin with the raw amino-acid sequence, 53 residues long: UPF0391 membrane protein ECA0470 (53 aa).

The next 2 helical transmembrane spans lie at 4–24 and 30–47; these read WGII…GGLA and AAKI…VSLF.

Belongs to the UPF0391 family.

It is found in the cell membrane. This is UPF0391 membrane protein ECA0470 from Pectobacterium atrosepticum (strain SCRI 1043 / ATCC BAA-672) (Erwinia carotovora subsp. atroseptica).